Reading from the N-terminus, the 575-residue chain is MPYSEVEAKFLGPGKEQTREPCYKKLKSAADDGVSPLRGGPDIHRIQEKPRNNRVAVATINFRRRVCPQEDKTSTDVLKPLHKEMPGDKLGGSESIGSPALQDGKPSPLAKDDEIYSTSKAFIGPIYKPPEKKKCRERKSETDTFSSIDSKRRQEEKQKSNSKKLEMDTELSQFYKEIEELENENEASQGSCTEPEPSEEPIISYDWACNTLKSEEENKDLSDVLQSHCGYQEYLEDEPDYPCDEQLMPAFCETSFPSFRPEWQSMHPFVIPHDPLSSFNYFNFQRFGTPLHPSPDVFHGRDDSQMQNGCYVDSYQDGWSCLTFDQNDEYANYDVTSNNVHPFRNGCSVQDESVNNGFCEIRECWQDPSMDKHNETDRFVNQWFQEEKLNKLQKLLILLRGLPGSGKTTLSRILLGQSRDGIVFSTDDYFHHQDGYRYNVNQLGDAHDWNQNRAKQAIDQGRSPVIIDNTNTQAWEMKPYVEMAIGKGYRVEFHEPETWWKFDPEELEKRNKHGVSRKKIAQMLDRYEFQMSISIVMNSVEPTQKSIQRPLPLEGEQRWGGSLGSHSQVSIADDY.

Composition is skewed to basic and acidic residues over residues 69–87 (QEDKTSTDVLKPLHKEMPG), 129–142 (PPEKKKCRERKSET), and 149–167 (DSKRRQEEKQKSNSKKLEM). Disordered regions lie at residues 69 to 169 (QEDK…EMDT) and 555 to 575 (GEQRWGGSLGSHSQVSIADDY). Residues 162–194 (SKKLEMDTELSQFYKEIEELENENEASQGSCTE) are a coiled coil. A compositionally biased stretch (polar residues) spans 564 to 575 (GSHSQVSIADDY).

In Mus musculus (Mouse), this protein is NEDD4-binding protein 2-like 2 (N4bp2l2).